Consider the following 308-residue polypeptide: Ectoine dioxygenase (308 aa).

Gln-131 provides a ligand contact to L-ectoine. A 2-oxoglutarate-binding site is contributed by Lys-137. Fe cation is bound by residues His-148, Asp-150, and His-249.

Belongs to the PhyH family. EctD subfamily. As to quaternary structure, homodimer. It depends on Fe(2+) as a cofactor.

The catalysed reaction is L-ectoine + 2-oxoglutarate + O2 = 5-hydroxyectoine + succinate + CO2. Functionally, involved in the biosynthesis of 5-hydroxyectoine, called compatible solute, which helps organisms to survive extreme osmotic stress by acting as a highly soluble organic osmolyte. Catalyzes the 2-oxoglutarate-dependent selective hydroxylation of L-ectoine to yield (4S,5S)-5-hydroxyectoine. This chain is Ectoine dioxygenase, found in Bordetella bronchiseptica (strain ATCC BAA-588 / NCTC 13252 / RB50) (Alcaligenes bronchisepticus).